A 131-amino-acid chain; its full sequence is Fumarate reductase subunit C (131 aa).

3 helical membrane-spanning segments follow: residues 30-50, 63-83, and 109-129; these read EGTAVPAVWFSIELIFGLFAL, FLQNPVIVIINLITLAAALLH, and IIKSLWAVTVVATIVILFVAL.

Belongs to the FrdC family. As to quaternary structure, part of an enzyme complex containing four subunits: a flavoprotein (FrdA), an iron-sulfur protein (FrdB), and two hydrophobic anchor proteins (FrdC and FrdD).

It localises to the cell inner membrane. Its function is as follows. Two distinct, membrane-bound, FAD-containing enzymes are responsible for the catalysis of fumarate and succinate interconversion; fumarate reductase is used in anaerobic growth, and succinate dehydrogenase is used in aerobic growth. Anchors the catalytic components of the fumarate reductase complex to the cell inner membrane, binds quinones. The polypeptide is Fumarate reductase subunit C (Escherichia coli O17:K52:H18 (strain UMN026 / ExPEC)).